Reading from the N-terminus, the 369-residue chain is Queuine tRNA-ribosyltransferase accessory subunit 2 (369 aa).

Positions 263–282 (SSKLTEVEEENGNDSSNDQD) are disordered. Positions 308, 310, 313, and 339 each coordinate Zn(2+).

This sequence belongs to the queuine tRNA-ribosyltransferase family. QTRT2 subfamily. Heterodimer of a catalytic subunit and an accessory subunit. The cofactor is Zn(2+).

It localises to the cytoplasm. Functionally, non-catalytic subunit of the queuine tRNA-ribosyltransferase (TGT) that catalyzes the base-exchange of a guanine (G) residue with queuine (Q) at position 34 (anticodon wobble position) in tRNAs with GU(N) anticodons (tRNA-Asp, -Asn, -His and -Tyr), resulting in the hypermodified nucleoside queuosine (7-(((4,5-cis-dihydroxy-2-cyclopenten-1-yl)amino)methyl)-7-deazaguanosine). The polypeptide is Queuine tRNA-ribosyltransferase accessory subunit 2 (Trichoplax adhaerens (Trichoplax reptans)).